Reading from the N-terminus, the 236-residue chain is tRNA1(Val) (adenine(37)-N6)-methyltransferase (236 aa).

Belongs to the methyltransferase superfamily. tRNA (adenine-N(6)-)-methyltransferase family.

It localises to the cytoplasm. The enzyme catalyses adenosine(37) in tRNA1(Val) + S-adenosyl-L-methionine = N(6)-methyladenosine(37) in tRNA1(Val) + S-adenosyl-L-homocysteine + H(+). Functionally, specifically methylates the adenine in position 37 of tRNA(1)(Val) (anticodon cmo5UAC). This Shewanella sp. (strain MR-7) protein is tRNA1(Val) (adenine(37)-N6)-methyltransferase.